Consider the following 272-residue polypeptide: Diaminopimelate epimerase (272 aa).

Positions 11 and 60 each coordinate substrate. Residue cysteine 69 is the Proton donor of the active site. Substrate contacts are provided by residues 70–71, asparagine 181, and 199–200; these read GN and ER. Catalysis depends on cysteine 209, which acts as the Proton acceptor. 210 to 211 provides a ligand contact to substrate; sequence GT.

It belongs to the diaminopimelate epimerase family. In terms of assembly, homodimer.

It is found in the cytoplasm. The enzyme catalyses (2S,6S)-2,6-diaminopimelate = meso-2,6-diaminopimelate. It functions in the pathway amino-acid biosynthesis; L-lysine biosynthesis via DAP pathway; DL-2,6-diaminopimelate from LL-2,6-diaminopimelate: step 1/1. Functionally, catalyzes the stereoinversion of LL-2,6-diaminopimelate (L,L-DAP) to meso-diaminopimelate (meso-DAP), a precursor of L-lysine and an essential component of the bacterial peptidoglycan. The polypeptide is Diaminopimelate epimerase (Helicobacter pylori (strain P12)).